The sequence spans 363 residues: Carbamoyl phosphate synthase small chain (363 aa).

Residues 1–172 (MTKRILMLED…AFASPGDGKR (172 aa)) form a CPSase region. L-glutamine contacts are provided by Ser-46, Gly-220, and Gly-222. Residues 172 to 359 (RVVLVDYGVK…MEMMNGKEEG (188 aa)) form the Glutamine amidotransferase type-1 domain. The active-site Nucleophile is Cys-247. 5 residues coordinate L-glutamine: Leu-248, Gln-251, Asn-289, Gly-291, and Tyr-292. Catalysis depends on residues His-332 and Glu-334.

It belongs to the CarA family. Composed of two chains; the small (or glutamine) chain promotes the hydrolysis of glutamine to ammonia, which is used by the large (or ammonia) chain to synthesize carbamoyl phosphate. Tetramer of heterodimers (alpha,beta)4.

It carries out the reaction hydrogencarbonate + L-glutamine + 2 ATP + H2O = carbamoyl phosphate + L-glutamate + 2 ADP + phosphate + 2 H(+). The enzyme catalyses L-glutamine + H2O = L-glutamate + NH4(+). Its pathway is amino-acid biosynthesis; L-arginine biosynthesis; carbamoyl phosphate from bicarbonate: step 1/1. It functions in the pathway pyrimidine metabolism; UMP biosynthesis via de novo pathway; (S)-dihydroorotate from bicarbonate: step 1/3. Small subunit of the glutamine-dependent carbamoyl phosphate synthetase (CPSase). CPSase catalyzes the formation of carbamoyl phosphate from the ammonia moiety of glutamine, carbonate, and phosphate donated by ATP, constituting the first step of 2 biosynthetic pathways, one leading to arginine and/or urea and the other to pyrimidine nucleotides. The small subunit (glutamine amidotransferase) binds and cleaves glutamine to supply the large subunit with the substrate ammonia. This Listeria monocytogenes serovar 1/2a (strain ATCC BAA-679 / EGD-e) protein is Carbamoyl phosphate synthase small chain.